Reading from the N-terminus, the 196-residue chain is ATP synthase subunit b 2 (196 aa).

Over residues 1-18 (MVVAQAGAPAHPPAAHGA) the composition is skewed to low complexity. A disordered region spans residues 1–33 (MVVAQAGAPAHPPAAHGAEAGHGEAAGGEHGGF). A helical membrane pass occupies residues 41-60 (FASQLIWLIVSFGALYFLMS).

It belongs to the ATPase B chain family. In terms of assembly, F-type ATPases have 2 components, F(1) - the catalytic core - and F(0) - the membrane proton channel. F(1) has five subunits: alpha(3), beta(3), gamma(1), delta(1), epsilon(1). F(0) has three main subunits: a(1), b(2) and c(10-14). The alpha and beta chains form an alternating ring which encloses part of the gamma chain. F(1) is attached to F(0) by a central stalk formed by the gamma and epsilon chains, while a peripheral stalk is formed by the delta and b chains.

It localises to the cell inner membrane. Functionally, f(1)F(0) ATP synthase produces ATP from ADP in the presence of a proton or sodium gradient. F-type ATPases consist of two structural domains, F(1) containing the extramembraneous catalytic core and F(0) containing the membrane proton channel, linked together by a central stalk and a peripheral stalk. During catalysis, ATP synthesis in the catalytic domain of F(1) is coupled via a rotary mechanism of the central stalk subunits to proton translocation. In terms of biological role, component of the F(0) channel, it forms part of the peripheral stalk, linking F(1) to F(0). The b'-subunit is a diverged and duplicated form of b found in plants and photosynthetic bacteria. The polypeptide is ATP synthase subunit b 2 (atpF2) (Azorhizobium caulinodans (strain ATCC 43989 / DSM 5975 / JCM 20966 / LMG 6465 / NBRC 14845 / NCIMB 13405 / ORS 571)).